The chain runs to 484 residues: BPI fold-containing family B member 1 (484 aa).

The first 21 residues, 1–21 (MAGPWTFTLLCGLLAATLIQA), serve as a signal peptide directing secretion. Asn48 is a glycosylation site (N-linked (GlcNAc...) asparagine). Cys158 and Cys201 form a disulfide bridge. N-linked (GlcNAc...) asparagine glycosylation is found at Asn264 and Asn401.

Belongs to the BPI/LBP/Plunc superfamily. Plunc family. As to expression, detected in duodenum mucosal crypts of cholera patients, near Paneth cells (at protein level). Detected in trachea, nasal septal epithelium and lung.

The protein localises to the secreted. Its function is as follows. May play a role in innate immunity in mouth, nose and lungs. Binds bacterial lipopolysaccharide (LPS) and modulates the cellular responses to LPS. In Homo sapiens (Human), this protein is BPI fold-containing family B member 1 (BPIFB1).